A 233-amino-acid chain; its full sequence is Small ribosomal subunit protein uS7m (233 aa).

Residues 1–28 (MAAPTAAGLCPRLRAWLPRLTQVRWSRY) constitute a mitochondrion transit peptide.

Belongs to the universal ribosomal protein uS7 family. Component of the mitochondrial ribosome small subunit (28S) which comprises a 12S rRNA and about 30 distinct proteins.

It localises to the mitochondrion. In Gallus gallus (Chicken), this protein is Small ribosomal subunit protein uS7m (MRPS7).